Reading from the N-terminus, the 194-residue chain is Fe/S biogenesis protein NfuA (194 aa).

[4Fe-4S] cluster-binding residues include Cys151 and Cys154.

This sequence belongs to the NfuA family. As to quaternary structure, homodimer. [4Fe-4S] cluster is required as a cofactor.

In terms of biological role, involved in iron-sulfur cluster biogenesis. Binds a 4Fe-4S cluster, can transfer this cluster to apoproteins, and thereby intervenes in the maturation of Fe/S proteins. Could also act as a scaffold/chaperone for damaged Fe/S proteins. This Photobacterium profundum (strain SS9) protein is Fe/S biogenesis protein NfuA.